The primary structure comprises 674 residues: Ribosome biogenesis protein BOP1 homolog (674 aa).

A disordered region spans residues Met-1–Asp-28. The segment covering Lys-15–Asp-28 has biased composition (basic and acidic residues). 7 WD repeats span residues Gly-342–Gln-384, Asp-386–Val-425, Gln-427–Lys-458, Met-459–Pro-500, Lys-503–Lys-541, His-587–Lys-626, and Pro-643–Tyr-674.

This sequence belongs to the WD repeat BOP1/ERB1 family.

It localises to the nucleus. The protein resides in the nucleolus. Its subcellular location is the nucleoplasm. In terms of biological role, required for maturation of ribosomal RNAs and formation of the large ribosomal subunit. This is Ribosome biogenesis protein BOP1 homolog from Caenorhabditis elegans.